Consider the following 175-residue polypeptide: Protein MODIFYING WALL LIGNIN-1 (175 aa).

The signal sequence occupies residues 1-24; that stretch reads MFIFLFGLAAFFLCLSAEFQKAKA. At 25–52 the chain is on the cytoplasmic side; the sequence is LLRAQVFLKGKDLKWDGESCYLPENRAF. The helical transmembrane segment at 53 to 73 threads the bilayer; the sequence is GLGIAALVCVSVAQIVGNVVI. Residues 74-86 are Extracellular-facing; it reads CRGFTKTDKTRTT. Residues 87–107 form a helical membrane-spanning segment; sequence IFCIILLLFSWVNFAVAVTLI. At 108–135 the chain is on the cytoplasmic side; sequence SVGASMNREQIYGKGWLNRECYLVKDGV. Residues 136–156 form a helical membrane-spanning segment; sequence FAASGFLSVTTMAAILGAFAF. At 157–175 the chain is on the extracellular side; it reads KVKPSLQVENHDKRHTQNV.

Belongs to the DESIGUAL family. As to quaternary structure, interacts with CRK19.

It localises to the cell membrane. In terms of biological role, together with MWL2, contributes to secondary cell wall biology, specifically lignin biosynthesis. In Arabidopsis thaliana (Mouse-ear cress), this protein is Protein MODIFYING WALL LIGNIN-1.